The chain runs to 254 residues: Type III pantothenate kinase (254 aa).

D6 to V13 is an ATP binding site. Residues Y100 and G107 to R110 each bind substrate. Residue D109 is the Proton acceptor of the active site. D129 is a K(+) binding site. T132 lines the ATP pocket. T184 is a binding site for substrate.

This sequence belongs to the type III pantothenate kinase family. Homodimer. Requires NH4(+) as cofactor. It depends on K(+) as a cofactor.

The protein resides in the cytoplasm. The enzyme catalyses (R)-pantothenate + ATP = (R)-4'-phosphopantothenate + ADP + H(+). It participates in cofactor biosynthesis; coenzyme A biosynthesis; CoA from (R)-pantothenate: step 1/5. In terms of biological role, catalyzes the phosphorylation of pantothenate (Pan), the first step in CoA biosynthesis. This is Type III pantothenate kinase from Anaeromyxobacter sp. (strain Fw109-5).